We begin with the raw amino-acid sequence, 678 residues long: Methionine--tRNA ligase (678 aa).

The 'HIGH' region signature appears at 18-28; that stretch reads PYANGPIHLGH. Residues cysteine 149, cysteine 152, cysteine 162, and cysteine 165 each coordinate Zn(2+). The 'KMSKS' region motif lies at 334–338; sequence KMSKS. Lysine 337 is a binding site for ATP. Positions 577–678 constitute a tRNA-binding domain; sequence DFAKVDLRVA…SGATPGMRVM (102 aa).

It belongs to the class-I aminoacyl-tRNA synthetase family. MetG type 1 subfamily. As to quaternary structure, homodimer. It depends on Zn(2+) as a cofactor.

The protein localises to the cytoplasm. The catalysed reaction is tRNA(Met) + L-methionine + ATP = L-methionyl-tRNA(Met) + AMP + diphosphate. In terms of biological role, is required not only for elongation of protein synthesis but also for the initiation of all mRNA translation through initiator tRNA(fMet) aminoacylation. The chain is Methionine--tRNA ligase from Marinobacter nauticus (strain ATCC 700491 / DSM 11845 / VT8) (Marinobacter aquaeolei).